The following is a 476-amino-acid chain: Ribosomal protein uS12 methylthiotransferase RimO (476 aa).

One can recognise an MTTase N-terminal domain in the interval 33-143; it reads NRIGFVSLGC…VLKHVHKYVP (111 aa). The [4Fe-4S] cluster site is built by C42, C78, C107, C175, C179, and C182. Residues 161 to 398 enclose the Radical SAM core domain; the sequence is LTPKHYAYLK…MEVQAEISAE (238 aa). One can recognise a TRAM domain in the interval 401-467; sequence ARFVGRTMDI…EHDLWAELVD (67 aa).

It belongs to the methylthiotransferase family. RimO subfamily. [4Fe-4S] cluster serves as cofactor.

The protein localises to the cytoplasm. The catalysed reaction is L-aspartate(89)-[ribosomal protein uS12]-hydrogen + (sulfur carrier)-SH + AH2 + 2 S-adenosyl-L-methionine = 3-methylsulfanyl-L-aspartate(89)-[ribosomal protein uS12]-hydrogen + (sulfur carrier)-H + 5'-deoxyadenosine + L-methionine + A + S-adenosyl-L-homocysteine + 2 H(+). Catalyzes the methylthiolation of an aspartic acid residue of ribosomal protein uS12. In Shewanella sp. (strain MR-4), this protein is Ribosomal protein uS12 methylthiotransferase RimO.